A 189-amino-acid polypeptide reads, in one-letter code: dCTP deaminase (189 aa).

DCTP is bound by residues 112 to 117 (KSTYAR), 136 to 138 (TLE), Q157, Y171, and Q181. The active-site Proton donor/acceptor is the E138.

The protein belongs to the dCTP deaminase family. Homotrimer.

It catalyses the reaction dCTP + H2O + H(+) = dUTP + NH4(+). Its pathway is pyrimidine metabolism; dUMP biosynthesis; dUMP from dCTP (dUTP route): step 1/2. In terms of biological role, catalyzes the deamination of dCTP to dUTP. The sequence is that of dCTP deaminase from Acinetobacter baylyi (strain ATCC 33305 / BD413 / ADP1).